Reading from the N-terminus, the 559-residue chain is Suppressor of tumorigenicity 7 protein-like (559 aa).

Helical transmembrane passes span 39–59, 83–103, and 513–533; these read GLAN…LYAL, FYVA…IFEW, and LPFF…LAFL.

Belongs to the ST7 family. In terms of tissue distribution, ubiquitously expressed.

It localises to the membrane. This Mus musculus (Mouse) protein is Suppressor of tumorigenicity 7 protein-like (St7l).